The sequence spans 72 residues: Translation initiation factor IF-1 (72 aa).

Positions 1 to 72 (MSKDDVIQMQ…SRARIVFRAK (72 aa)) constitute an S1-like domain.

Belongs to the IF-1 family. As to quaternary structure, component of the 30S ribosomal translation pre-initiation complex which assembles on the 30S ribosome in the order IF-2 and IF-3, IF-1 and N-formylmethionyl-tRNA(fMet); mRNA recruitment can occur at any time during PIC assembly.

The protein resides in the cytoplasm. Functionally, one of the essential components for the initiation of protein synthesis. Stabilizes the binding of IF-2 and IF-3 on the 30S subunit to which N-formylmethionyl-tRNA(fMet) subsequently binds. Helps modulate mRNA selection, yielding the 30S pre-initiation complex (PIC). Upon addition of the 50S ribosomal subunit IF-1, IF-2 and IF-3 are released leaving the mature 70S translation initiation complex. The chain is Translation initiation factor IF-1 from Albidiferax ferrireducens (strain ATCC BAA-621 / DSM 15236 / T118) (Rhodoferax ferrireducens).